Reading from the N-terminus, the 376-residue chain is Sterol 24-C-methyltransferase (376 aa).

This sequence belongs to the class I-like SAM-binding methyltransferase superfamily. Erg6/SMT family.

The enzyme catalyses zymosterol + S-adenosyl-L-methionine = fecosterol + S-adenosyl-L-homocysteine + H(+). Its pathway is steroid metabolism; ergosterol biosynthesis; ergosterol from zymosterol: step 1/5. Its activity is regulated as follows. Substrate analogs 25-azalanosterol and 24(R,S),25-epiminolanosterol act as inhibitors. Functionally, sterol 24-C-methyltransferase; part of the third module of ergosterol biosynthesis pathway that includes the late steps of the pathway. ERG6 catalyzes the methyl transfer from S-adenosyl-methionine to the C-24 of zymosterol to form fecosterol. The third module or late pathway involves the ergosterol synthesis itself through consecutive reactions that mainly occur in the endoplasmic reticulum (ER) membrane. Firstly, the squalene synthase ERG9 catalyzes the condensation of 2 farnesyl pyrophosphate moieties to form squalene, which is the precursor of all steroids. Squalene synthase is crucial for balancing the incorporation of farnesyl diphosphate (FPP) into sterol and nonsterol isoprene synthesis. Secondly, the squalene epoxidase ERG1 catalyzes the stereospecific oxidation of squalene to (S)-2,3-epoxysqualene, which is considered to be a rate-limiting enzyme in steroid biosynthesis. Then, the lanosterol synthase ERG7 catalyzes the cyclization of (S)-2,3 oxidosqualene to lanosterol, a reaction that forms the sterol core. In the next steps, lanosterol is transformed to zymosterol through a complex process involving various demethylation, reduction and desaturation reactions. The lanosterol 14-alpha-demethylase ERG11 (also known as CYP51) catalyzes C14-demethylation of lanosterol to produce 4,4'-dimethyl cholesta-8,14,24-triene-3-beta-ol, which is critical for ergosterol biosynthesis. The C-14 reductase ERG24 reduces the C14=C15 double bond of 4,4-dimethyl-cholesta-8,14,24-trienol to produce 4,4-dimethyl-cholesta-8,24-dienol. 4,4-dimethyl-cholesta-8,24-dienol is substrate of the C-4 demethylation complex ERG25-ERG26-ERG27 in which ERG25 catalyzes the three-step monooxygenation required for the demethylation of 4,4-dimethyl and 4alpha-methylsterols, ERG26 catalyzes the oxidative decarboxylation that results in a reduction of the 3-beta-hydroxy group at the C-3 carbon to an oxo group, and ERG27 is responsible for the reduction of the keto group on the C-3. ERG28 has a role as a scaffold to help anchor ERG25, ERG26 and ERG27 to the endoplasmic reticulum and ERG29 regulates the activity of the iron-containing C4-methylsterol oxidase ERG25. Then, the sterol 24-C-methyltransferase ERG6 catalyzes the methyl transfer from S-adenosyl-methionine to the C-24 of zymosterol to form fecosterol. The C-8 sterol isomerase ERG2 catalyzes the reaction which results in unsaturation at C-7 in the B ring of sterols and thus converts fecosterol to episterol. The sterol-C5-desaturase ERG3 then catalyzes the introduction of a C-5 double bond in the B ring to produce 5-dehydroepisterol. The C-22 sterol desaturase ERG5 further converts 5-dehydroepisterol into ergosta-5,7,22,24(28)-tetraen-3beta-ol by forming the C-22(23) double bond in the sterol side chain. Finally, ergosta-5,7,22,24(28)-tetraen-3beta-ol is substrate of the C-24(28) sterol reductase ERG4 to produce ergosterol. The chain is Sterol 24-C-methyltransferase from Candida albicans (strain SC5314 / ATCC MYA-2876) (Yeast).